The primary structure comprises 367 residues: Leucine-rich repeat-containing protein 28 (367 aa).

LRR repeat units follow at residues 16-36 (KHKN…ELLK), 42-63 (YLER…LAQK), 66-87 (NLVE…IGSL), 89-111 (KLQS…GRLK), 112-133 (SLRH…IGKL), 135-156 (ELQT…LYQC), 158-179 (SLQY…LCQL), 181-202 (SLNE…LGRS), and 204-226 (ELQY…LYNK).

In Xenopus tropicalis (Western clawed frog), this protein is Leucine-rich repeat-containing protein 28 (lrrc28).